The sequence spans 715 residues: Fatty acid oxidation complex subunit alpha (715 aa).

Residues 1–190 (MIYEGKAITV…KVGAVDAVVA (190 aa)) are enoyl-CoA hydratase/isomerase. Substrate is bound at residue Asp-297. The interval 312–715 (HDVKQAAVLG…MAKNGQRFFN (404 aa)) is 3-hydroxyacyl-CoA dehydrogenase. NAD(+)-binding positions include Met-325, Asp-344, 401 to 403 (VVE), Lys-408, and Ser-430. Catalysis depends on His-451, which acts as the For 3-hydroxyacyl-CoA dehydrogenase activity. Asn-454 serves as a coordination point for NAD(+). 2 residues coordinate substrate: Asn-501 and Tyr-660.

It in the N-terminal section; belongs to the enoyl-CoA hydratase/isomerase family. This sequence in the C-terminal section; belongs to the 3-hydroxyacyl-CoA dehydrogenase family. Heterotetramer of two alpha chains (FadB) and two beta chains (FadA).

The catalysed reaction is a (3S)-3-hydroxyacyl-CoA + NAD(+) = a 3-oxoacyl-CoA + NADH + H(+). The enzyme catalyses a (3S)-3-hydroxyacyl-CoA = a (2E)-enoyl-CoA + H2O. It catalyses the reaction a 4-saturated-(3S)-3-hydroxyacyl-CoA = a (3E)-enoyl-CoA + H2O. It carries out the reaction (3S)-3-hydroxybutanoyl-CoA = (3R)-3-hydroxybutanoyl-CoA. The catalysed reaction is a (3Z)-enoyl-CoA = a 4-saturated (2E)-enoyl-CoA. The enzyme catalyses a (3E)-enoyl-CoA = a 4-saturated (2E)-enoyl-CoA. It functions in the pathway lipid metabolism; fatty acid beta-oxidation. Functionally, involved in the aerobic and anaerobic degradation of long-chain fatty acids via beta-oxidation cycle. Catalyzes the formation of 3-oxoacyl-CoA from enoyl-CoA via L-3-hydroxyacyl-CoA. It can also use D-3-hydroxyacyl-CoA and cis-3-enoyl-CoA as substrate. In Pseudomonas putida (strain ATCC 47054 / DSM 6125 / CFBP 8728 / NCIMB 11950 / KT2440), this protein is Fatty acid oxidation complex subunit alpha.